Reading from the N-terminus, the 190-residue chain is Imidazoleglycerol-phosphate dehydratase (190 aa).

Belongs to the imidazoleglycerol-phosphate dehydratase family.

It localises to the cytoplasm. It carries out the reaction D-erythro-1-(imidazol-4-yl)glycerol 3-phosphate = 3-(imidazol-4-yl)-2-oxopropyl phosphate + H2O. Its pathway is amino-acid biosynthesis; L-histidine biosynthesis; L-histidine from 5-phospho-alpha-D-ribose 1-diphosphate: step 6/9. The protein is Imidazoleglycerol-phosphate dehydratase of Methanococcus maripaludis (strain DSM 14266 / JCM 13030 / NBRC 101832 / S2 / LL).